The chain runs to 422 residues: WD repeat and SOCS box-containing protein 1 (422 aa).

WD repeat units lie at residues 124–165 (SRCV…LLLN), 168–208 (DHTE…NMMK), 212–251 (GHQN…MIRK), 254–293 (GHYN…ILFE), and 309–346 (DNGR…SYPV). In terms of domain architecture, SOCS box spans 374-422 (NAYFWSTPKYVSSLQHLCRMAIRRVMNTNEVKKLPIPQKIMEFLTYQTM).

Component of a probable ECS E3 ubiquitin-protein ligase complex that contains the Elongin BC complex.

The protein operates within protein modification; protein ubiquitination. Functionally, probable substrate-recognition component of a SCF-like ECS (Elongin-Cullin-SOCS-box protein) E3 ubiquitin-protein ligase complex which mediates the ubiquitination and subsequent proteasomal degradation of target proteins. This Xenopus tropicalis (Western clawed frog) protein is WD repeat and SOCS box-containing protein 1 (wsb1).